Reading from the N-terminus, the 260-residue chain is 5'-nucleotidase SurE (260 aa).

A divalent metal cation contacts are provided by aspartate 19, aspartate 20, serine 51, and asparagine 104.

The protein belongs to the SurE nucleotidase family. A divalent metal cation serves as cofactor.

Its subcellular location is the cytoplasm. It catalyses the reaction a ribonucleoside 5'-phosphate + H2O = a ribonucleoside + phosphate. Its function is as follows. Nucleotidase that shows phosphatase activity on nucleoside 5'-monophosphates. The protein is 5'-nucleotidase SurE of Paramagnetospirillum magneticum (strain ATCC 700264 / AMB-1) (Magnetospirillum magneticum).